The sequence spans 244 residues: MNEKNIKHSQNFITSKHNIDKIMTNIRLNEHDNIFEIGSGKGHFTLELVQRCNFVTAIEIDHKLCKTTENKLVDHDNFQVLNKDILQFKFPKNQSYKIFGNIPYNISTDIIRKIVFDSIADEIYLIVEYGFAKRLLNTKRSFALFLMAEVDISILSMVPREYFHPKPKVNSSLIRLNRKKSRISHKDKQKYNYFVMKWVNKEYKKIFTKNQFNNSLKHAGIDDLNNISFEQFLSLFNSYKLFNK.

Asn11, Ile13, Gly38, Glu59, Asp84, and Asn101 together coordinate S-adenosyl-L-methionine.

Belongs to the class I-like SAM-binding methyltransferase superfamily. rRNA adenine N(6)-methyltransferase family.

The enzyme catalyses adenosine(2085) in 23S rRNA + 2 S-adenosyl-L-methionine = N(6)-dimethyladenosine(2085) in 23S rRNA + 2 S-adenosyl-L-homocysteine + 2 H(+). Its function is as follows. This protein produces a dimethylation of the adenine residue at position 2085 in 23S rRNA, resulting in reduced affinity between ribosomes and macrolide-lincosamide-streptogramin B antibiotics. The chain is rRNA adenine N-6-methyltransferase (ermM) from Staphylococcus epidermidis.